Consider the following 321-residue polypeptide: Carnitine monooxygenase reductase subunit (321 aa).

The FAD-binding FR-type domain occupies 4-109 (YQMFEVQVSQ…STPNNLFALI (106 aa)). The region spanning 233–321 (DAFTLVLARS…AKGKRLVLDL (89 aa)) is the 2Fe-2S ferredoxin-type domain. Residues cysteine 270, cysteine 275, cysteine 278, and cysteine 308 each coordinate [2Fe-2S] cluster.

The protein belongs to the PDR/VanB family. CntB subfamily. As to quaternary structure, composed of an oxygenase subunit (yeaW) and a reductase subunit (yeaX). FMN is required as a cofactor. Requires [2Fe-2S] cluster as cofactor.

The catalysed reaction is (R)-carnitine + NADH + O2 + H(+) = (3R)-3-hydroxy-4-oxobutanoate + trimethylamine + NAD(+) + H2O. It catalyses the reaction (R)-carnitine + NADPH + O2 + H(+) = (3R)-3-hydroxy-4-oxobutanoate + trimethylamine + NADP(+) + H2O. Its pathway is amine and polyamine metabolism; carnitine metabolism. In terms of biological role, converts carnitine to trimethylamine and malic semialdehyde. Can also use gamma-butyrobetaine, choline and betaine as substrates. In Escherichia coli (strain K12), this protein is Carnitine monooxygenase reductase subunit (yeaX).